The primary structure comprises 168 residues: CS3 fimbrial subunit A (168 aa).

A signal peptide spans 1 to 22; the sequence is MLKIKYLLIGLSLSAMSSYSLA.

A longer minor form, starting at amino acid 15, has been detected by amino acid sequencing. This is probably due to alternative processing of the signal peptide.

It is found in the fimbrium. Its function is as follows. Fimbriae (also called pili), polar filaments radiating from the surface of the bacterium to a length of 0.5-1.5 micrometers and numbering 100-300 per cell, enable bacteria to colonize the epithelium of specific host organs. This Escherichia coli protein is CS3 fimbrial subunit A.